The primary structure comprises 186 residues: Ribosome-recycling factor (186 aa).

The protein belongs to the RRF family.

Its subcellular location is the cytoplasm. Its function is as follows. Responsible for the release of ribosomes from messenger RNA at the termination of protein biosynthesis. May increase the efficiency of translation by recycling ribosomes from one round of translation to another. In Chlorobium limicola (strain DSM 245 / NBRC 103803 / 6330), this protein is Ribosome-recycling factor.